A 699-amino-acid chain; its full sequence is Probable xyloglucan glycosyltransferase 12 (699 aa).

The next 2 helical transmembrane spans lie at 126-146 (CLKV…AAYF) and 194-214 (IVLF…CFWI). Asp280 is an active-site residue. Residues Asp339 and Asp341 each coordinate substrate. Residue Asp433 is part of the active site. 2 helical membrane-spanning segments follow: residues 511-531 (LILP…TMFV) and 536-556 (LPAW…ILPA). The segment at 616–646 (EKTTKHQRGVSAPETEAEKKAEKTKRKKKKH) is disordered. Residues Lys617 and Lys620 each participate in a glycyl lysine isopeptide (Lys-Gly) (interchain with G-Cter in ubiquitin) cross-link. The residue at position 626 (Ser626) is a Phosphoserine. Over residues 637–646 (EKTKRKKKKH) the composition is skewed to basic residues. 2 helical membrane passes run 649-668 (IYMK…TRSL) and 674-694 (IHFY…LDLI).

It belongs to the glycosyltransferase 2 family. Plant cellulose synthase-like C subfamily. As to quaternary structure, homodimer. Mainly expressed in roots, flowers and seeds, and, at very low levels, in seedlings, leaves and stems.

It localises to the golgi apparatus membrane. In terms of biological role, probable beta-1,4-glucan synthase rather involved in the synthesis of the xyloglucan backbone than cellulose. Seems to work simultaneously with xyloglucan 6-xylosyltransferase. Xyloglucan is a noncellulosic polysaccharides of plant cell wall and consists of a glucan backbone substituted by xylose, galactose and fucose. This chain is Probable xyloglucan glycosyltransferase 12, found in Arabidopsis thaliana (Mouse-ear cress).